The following is a 417-amino-acid chain: UDP-N-acetylglucosamine 1-carboxyvinyltransferase (417 aa).

Residue 23–24 (KN) coordinates phosphoenolpyruvate. Arg93 contributes to the UDP-N-acetyl-alpha-D-glucosamine binding site. The Proton donor role is filled by Asp117. UDP-N-acetyl-alpha-D-glucosamine contacts are provided by Asp305 and Val327.

The protein belongs to the EPSP synthase family. MurA subfamily.

It localises to the cytoplasm. It catalyses the reaction phosphoenolpyruvate + UDP-N-acetyl-alpha-D-glucosamine = UDP-N-acetyl-3-O-(1-carboxyvinyl)-alpha-D-glucosamine + phosphate. Its pathway is cell wall biogenesis; peptidoglycan biosynthesis. Cell wall formation. Adds enolpyruvyl to UDP-N-acetylglucosamine. This is UDP-N-acetylglucosamine 1-carboxyvinyltransferase from Mycolicibacterium paratuberculosis (strain ATCC BAA-968 / K-10) (Mycobacterium paratuberculosis).